The sequence spans 352 residues: Invasion chromosome antigen T (352 aa).

Belongs to the IcaT/YfdF family.

The protein localises to the secreted. Its function is as follows. May contribute to pathogenesis, although some of its characteristics suggest it is a fossil gene. This chain is Invasion chromosome antigen T, found in Shigella flexneri serotype 5a (strain M90T).